The sequence spans 407 residues: Imidazolonepropionase (407 aa).

Fe(3+) is bound by residues His-68 and His-70. Residues His-68 and His-70 each coordinate Zn(2+). 3 residues coordinate 4-imidazolone-5-propanoate: Arg-77, Tyr-140, and His-173. Tyr-140 provides a ligand contact to N-formimidoyl-L-glutamate. Residue His-238 coordinates Fe(3+). His-238 contacts Zn(2+). Gln-241 serves as a coordination point for 4-imidazolone-5-propanoate. Asp-313 contacts Fe(3+). Asp-313 is a Zn(2+) binding site. Residues Asn-315 and Gly-317 each coordinate N-formimidoyl-L-glutamate. Thr-318 provides a ligand contact to 4-imidazolone-5-propanoate.

This sequence belongs to the metallo-dependent hydrolases superfamily. HutI family. It depends on Zn(2+) as a cofactor. Fe(3+) is required as a cofactor.

The protein resides in the cytoplasm. The catalysed reaction is 4-imidazolone-5-propanoate + H2O = N-formimidoyl-L-glutamate. It participates in amino-acid degradation; L-histidine degradation into L-glutamate; N-formimidoyl-L-glutamate from L-histidine: step 3/3. Functionally, catalyzes the hydrolytic cleavage of the carbon-nitrogen bond in imidazolone-5-propanoate to yield N-formimidoyl-L-glutamate. It is the third step in the universal histidine degradation pathway. The protein is Imidazolonepropionase of Burkholderia ambifaria (strain ATCC BAA-244 / DSM 16087 / CCUG 44356 / LMG 19182 / AMMD) (Burkholderia cepacia (strain AMMD)).